We begin with the raw amino-acid sequence, 240 residues long: Ubiquinone biosynthesis O-methyltransferase (240 aa).

Residues arginine 44, glycine 64, aspartate 85, and methionine 129 each coordinate S-adenosyl-L-methionine.

Belongs to the methyltransferase superfamily. UbiG/COQ3 family.

The catalysed reaction is a 3-demethylubiquinol + S-adenosyl-L-methionine = a ubiquinol + S-adenosyl-L-homocysteine + H(+). It catalyses the reaction a 3-(all-trans-polyprenyl)benzene-1,2-diol + S-adenosyl-L-methionine = a 2-methoxy-6-(all-trans-polyprenyl)phenol + S-adenosyl-L-homocysteine + H(+). The protein operates within cofactor biosynthesis; ubiquinone biosynthesis. In terms of biological role, O-methyltransferase that catalyzes the 2 O-methylation steps in the ubiquinone biosynthetic pathway. This is Ubiquinone biosynthesis O-methyltransferase from Escherichia coli O6:K15:H31 (strain 536 / UPEC).